The chain runs to 519 residues: Bifunctional dihydrofolate reductase-thymidylate synthase 1 (519 aa).

Alanine 2 bears the N-acetylalanine mark. Positions 21 to 198 (TYQVVVAATK…LRFCFTTFVR (178 aa)) constitute a DHFR domain. Substrate is bound at residue valine 25. Residues alanine 27 and 33 to 39 (GIGKDGK) each bind NADP(+). Residue aspartate 47 coordinates substrate. Residues 71–73 (RKT) and 92–95 (LTRS) each bind NADP(+). Residue isoleucine 134 coordinates substrate. Residue 135 to 142 (GGGDILRE) coordinates NADP(+). Threonine 155 is a substrate binding site. Residues 201-234 (SSADESSDESNGSQSLQFDGKKFLFLPKMVFDQH) are hinge. The segment at 235–519 (EEFLYLNMVE…HKKIEMKMAV (285 aa)) is thymidylate synthase. Arginine 256 is a binding site for dUMP. Cysteine 401 is an active-site residue. Residues histidine 402, 420-424 (QRSAD), asparagine 432, and 462-464 (HVY) each bind dUMP.

The protein in the N-terminal section; belongs to the dihydrofolate reductase family. In the C-terminal section; belongs to the thymidylate synthase family. Heterodimer or homodimer.

It carries out the reaction (6S)-5,6,7,8-tetrahydrofolate + NADP(+) = 7,8-dihydrofolate + NADPH + H(+). The enzyme catalyses dUMP + (6R)-5,10-methylene-5,6,7,8-tetrahydrofolate = 7,8-dihydrofolate + dTMP. It participates in cofactor biosynthesis; tetrahydrofolate biosynthesis; 5,6,7,8-tetrahydrofolate from 7,8-dihydrofolate: step 1/1. Its function is as follows. Bifunctional enzyme. Involved in de novo dTMP biosynthesis. Key enzyme in folate metabolism. Can play two different roles depending on the source of dihydrofolate: de novo synthesis of tetrahydrofolate or recycling of the dihydrofolate released as one of the end products of the TS catalyzed reaction. Catalyzes an essential reaction for de novo glycine and purine synthesis, DNA precursor synthesis, and for the conversion of dUMP to dTMP. The chain is Bifunctional dihydrofolate reductase-thymidylate synthase 1 (THY-1) from Arabidopsis thaliana (Mouse-ear cress).